Here is a 150-residue protein sequence, read N- to C-terminus: uncharacterized protein (150 aa).

Belongs to the OsmC/Ohr family.

This is an uncharacterized protein from Bacillus subtilis (strain 168).